Consider the following 198-residue polypeptide: NADH-quinone oxidoreductase subunit B (198 aa).

[4Fe-4S] cluster-binding residues include C62, C63, C128, and C158.

This sequence belongs to the complex I 20 kDa subunit family. NDH-1 is composed of 14 different subunits. Subunits NuoB, C, D, E, F, and G constitute the peripheral sector of the complex. Requires [4Fe-4S] cluster as cofactor.

Its subcellular location is the cell inner membrane. The enzyme catalyses a quinone + NADH + 5 H(+)(in) = a quinol + NAD(+) + 4 H(+)(out). Its function is as follows. NDH-1 shuttles electrons from NADH, via FMN and iron-sulfur (Fe-S) centers, to quinones in the respiratory chain. The immediate electron acceptor for the enzyme in this species is believed to be a menaquinone. Couples the redox reaction to proton translocation (for every two electrons transferred, four hydrogen ions are translocated across the cytoplasmic membrane), and thus conserves the redox energy in a proton gradient. The sequence is that of NADH-quinone oxidoreductase subunit B from Phocaeicola vulgatus (strain ATCC 8482 / DSM 1447 / JCM 5826 / CCUG 4940 / NBRC 14291 / NCTC 11154) (Bacteroides vulgatus).